We begin with the raw amino-acid sequence, 557 residues long: Urocanate hydratase (557 aa).

Residues Gly52–Gly53, Gln130, Gly176–Gly178, Glu196, Arg201, Asn242–Ala243, Gln263–His267, Tyr273–Leu274, and Tyr322 contribute to the NAD(+) site. Cys410 is an active-site residue. NAD(+) is bound at residue Gly492.

This sequence belongs to the urocanase family. It depends on NAD(+) as a cofactor.

It is found in the cytoplasm. It catalyses the reaction 4-imidazolone-5-propanoate = trans-urocanate + H2O. It functions in the pathway amino-acid degradation; L-histidine degradation into L-glutamate; N-formimidoyl-L-glutamate from L-histidine: step 2/3. Catalyzes the conversion of urocanate to 4-imidazolone-5-propionate. This chain is Urocanate hydratase, found in Allorhizobium ampelinum (strain ATCC BAA-846 / DSM 112012 / S4) (Agrobacterium vitis (strain S4)).